The chain runs to 143 residues: Hemoglobin subunit alpha (143 aa).

Serine 2 is modified (N-acetylserine). Residues 2 to 143 (SLSDKDKAAV…LALALSEKYR (142 aa)) enclose the Globin domain. Histidine 60 is a binding site for O2. Residue histidine 89 coordinates heme b.

This sequence belongs to the globin family. Heterotetramer of two alpha chains and two beta chains. Red blood cells.

Involved in oxygen transport from gills to the various peripheral tissues. This is Hemoglobin subunit alpha (hba) from Cyprinus carpio (Common carp).